We begin with the raw amino-acid sequence, 698 residues long: Dolichyl-diphosphooligosaccharide--protein glycosyltransferase subunit 2 (698 aa).

The N-terminal stretch at Met-1 to Ala-29 is a signal peptide. The Lumenal portion of the chain corresponds to Val-30–Glu-600. A helical transmembrane segment spans residues Leu-601 to Met-621. At Arg-622 to Ala-638 the chain is on the cytoplasmic side. The helical transmembrane segment at Phe-639 to Ile-659 threads the bilayer. Lys-660 is a topological domain (lumenal). A helical transmembrane segment spans residues Leu-661–Gly-681. Residues His-682 to Ala-698 lie on the Cytoplasmic side of the membrane.

Belongs to the SWP1 family. Component of the oligosaccharyltransferase (OST) complex.

The protein localises to the endoplasmic reticulum membrane. The protein operates within protein modification; protein glycosylation. Functionally, subunit of the oligosaccharyl transferase (OST) complex that catalyzes the initial transfer of a defined glycan (Glc(3)Man(9)GlcNAc(2) in eukaryotes) from the lipid carrier dolichol-pyrophosphate to an asparagine residue within an Asn-X-Ser/Thr consensus motif in nascent polypeptide chains, the first step in protein N-glycosylation. N-glycosylation occurs cotranslationally and the complex associates with the Sec61 complex at the channel-forming translocon complex that mediates protein translocation across the endoplasmic reticulum (ER). All subunits are required for a maximal enzyme activity. This chain is Dolichyl-diphosphooligosaccharide--protein glycosyltransferase subunit 2 (RPN2), found in Oryza sativa subsp. japonica (Rice).